We begin with the raw amino-acid sequence, 701 residues long: Elongation factor G 2 (701 aa).

The 283-residue stretch at 8–290 (ERYRNIGISA…AVIDYLPSPA (283 aa)) folds into the tr-type G domain. Residues 17–24 (AHIDAGKT), 88–92 (DTPGH), and 142–145 (NKMD) each bind GTP.

This sequence belongs to the TRAFAC class translation factor GTPase superfamily. Classic translation factor GTPase family. EF-G/EF-2 subfamily.

It is found in the cytoplasm. Functionally, catalyzes the GTP-dependent ribosomal translocation step during translation elongation. During this step, the ribosome changes from the pre-translocational (PRE) to the post-translocational (POST) state as the newly formed A-site-bound peptidyl-tRNA and P-site-bound deacylated tRNA move to the P and E sites, respectively. Catalyzes the coordinated movement of the two tRNA molecules, the mRNA and conformational changes in the ribosome. This is Elongation factor G 2 from Cupriavidus pinatubonensis (strain JMP 134 / LMG 1197) (Cupriavidus necator (strain JMP 134)).